Consider the following 145-residue polypeptide: Mediator of RNA polymerase II transcription subunit 21 (145 aa).

Residues Glu-79–Asp-112 are a coiled coil.

It belongs to the Mediator complex subunit 21 family. In terms of assembly, component of the Mediator complex.

The protein resides in the nucleus. Its function is as follows. Component of the Mediator complex, a coactivator involved in the regulated transcription of nearly all RNA polymerase II-dependent genes. Mediator functions as a bridge to convey information from gene-specific regulatory proteins to the basal RNA polymerase II transcription machinery. Mediator is recruited to promoters by direct interactions with regulatory proteins and serves as a scaffold for the assembly of a functional preinitiation complex with RNA polymerase II and the general transcription factors. In Danio rerio (Zebrafish), this protein is Mediator of RNA polymerase II transcription subunit 21 (med21).